The sequence spans 217 residues: MSPFTAGPAPARTPRAEEGDTPATRFDDRLAEQLLDQRIVLLGTQVDEVSANRVCAQLLILSAQDPRTDISLYVNSPGGSVHAGLAIYDTMRLIPNDVSTLAMGFAASMGQFLLSVGTAGKRYALPNARIMMHQPSAGIGGTTADIEIQADNLDFTKRTIERITAEHTGQSPETISRDGDRDRWFTAEEAREYGMVDQVVQSLADVRPAATRRRMGL.

Residues 1–13 (MSPFTAGPAPART) show a composition bias toward low complexity. The tract at residues 1 to 23 (MSPFTAGPAPARTPRAEEGDTPA) is disordered. Residue Ser-108 is the Nucleophile of the active site. His-133 is a catalytic residue.

The protein belongs to the peptidase S14 family. In terms of assembly, fourteen ClpP subunits assemble into 2 heptameric rings which stack back to back to give a disk-like structure with a central cavity, resembling the structure of eukaryotic proteasomes.

It localises to the cytoplasm. It carries out the reaction Hydrolysis of proteins to small peptides in the presence of ATP and magnesium. alpha-casein is the usual test substrate. In the absence of ATP, only oligopeptides shorter than five residues are hydrolyzed (such as succinyl-Leu-Tyr-|-NHMec, and Leu-Tyr-Leu-|-Tyr-Trp, in which cleavage of the -Tyr-|-Leu- and -Tyr-|-Trp bonds also occurs).. Cleaves peptides in various proteins in a process that requires ATP hydrolysis. Has a chymotrypsin-like activity. Plays a major role in the degradation of misfolded proteins. In Streptomyces coelicolor (strain ATCC BAA-471 / A3(2) / M145), this protein is ATP-dependent Clp protease proteolytic subunit 3.